An 868-amino-acid chain; its full sequence is Translation initiation factor IF-2 (868 aa).

A disordered region spans residues 201 to 269; the sequence is KEEVKPEKVS…GTEKSDKYRE (69 aa). The span at 249–260 shows a compositional bias: basic residues; that stretch reads RGGRSKFKKKKG. The region spanning 368–537 is the tr-type G domain; that stretch reads GRAPVVTIMG…LLQSEVLELK (170 aa). A G1 region spans residues 377–384; it reads GHVDHGKT. GTP is bound at residue 377–384; it reads GHVDHGKT. The tract at residues 402 to 406 is G2; the sequence is GITQH. Residues 423–426 are G3; sequence DTPG. Residues 423–427 and 477–480 each bind GTP; these read DTPGH and NKMD. The interval 477–480 is G4; sequence NKMD. Residues 513-515 form a G5 region; the sequence is SAK.

The protein belongs to the TRAFAC class translation factor GTPase superfamily. Classic translation factor GTPase family. IF-2 subfamily.

It localises to the cytoplasm. Its function is as follows. One of the essential components for the initiation of protein synthesis. Protects formylmethionyl-tRNA from spontaneous hydrolysis and promotes its binding to the 30S ribosomal subunits. Also involved in the hydrolysis of GTP during the formation of the 70S ribosomal complex. This Legionella pneumophila (strain Corby) protein is Translation initiation factor IF-2.